The sequence spans 640 residues: Probable potassium transport system protein Kup 1 (640 aa).

12 consecutive transmembrane segments (helical) span residues 25–45 (LVLAALGVVYGDLGTSPLYAL), 65–85 (VVSLFLWSLILMVSVKYVMVL), 115–135 (AVGWVLLGLAGAAMLYGDGVI), 153–173 (PALAAYVVPATVVILAMLFMI), 181–201 (VGAAFGPILAAWFVAIAALGL), 227–247 (GFAGFVSLGAVVLCLTGAEAL), 263–283 (WYGLALPALILSYLGQGALLL), 305–325 (MVALSTLATIVASQALITAVF), 353–373 (IYLPLLNWTLMLATIAVVLGF), 381–401 (AAFGLAVSTTMAITTVLFAVL), 410–430 (WWAVALVAGSLFAIDLAFWLA), and 438–458 (GGWLPLLLGLAVFCVMGCWFG).

This sequence belongs to the HAK/KUP transporter (TC 2.A.72) family.

It localises to the cell inner membrane. The enzyme catalyses K(+)(in) + H(+)(in) = K(+)(out) + H(+)(out). Its function is as follows. Transport of potassium into the cell. Likely operates as a K(+):H(+) symporter. The sequence is that of Probable potassium transport system protein Kup 1 from Chromobacterium violaceum (strain ATCC 12472 / DSM 30191 / JCM 1249 / CCUG 213 / NBRC 12614 / NCIMB 9131 / NCTC 9757 / MK).